The sequence spans 162 residues: uncharacterized protein (162 aa).

This is an uncharacterized protein from Sputnik virophage.